We begin with the raw amino-acid sequence, 385 residues long: Beta sliding clamp (385 aa).

It belongs to the beta sliding clamp family. Forms a ring-shaped head-to-tail homodimer around DNA which binds and tethers DNA polymerases and other proteins to the DNA. The DNA replisome complex has a single clamp-loading complex (3 tau and 1 each of delta, delta', psi and chi subunits) which binds 3 Pol III cores (1 core on the leading strand and 2 on the lagging strand) each with a beta sliding clamp dimer. Additional proteins in the replisome are other copies of gamma, psi and chi, Ssb, DNA helicase and RNA primase.

The protein resides in the cytoplasm. Functionally, confers DNA tethering and processivity to DNA polymerases and other proteins. Acts as a clamp, forming a ring around DNA (a reaction catalyzed by the clamp-loading complex) which diffuses in an ATP-independent manner freely and bidirectionally along dsDNA. Initially characterized for its ability to contact the catalytic subunit of DNA polymerase III (Pol III), a complex, multichain enzyme responsible for most of the replicative synthesis in bacteria; Pol III exhibits 3'-5' exonuclease proofreading activity. The beta chain is required for initiation of replication as well as for processivity of DNA replication. This Borreliella burgdorferi (strain ATCC 35210 / DSM 4680 / CIP 102532 / B31) (Borrelia burgdorferi) protein is Beta sliding clamp (dnaN).